Here is a 370-residue protein sequence, read N- to C-terminus: 4-hydroxy-3-methylbut-2-en-1-yl diphosphate synthase (flavodoxin) (370 aa).

The [4Fe-4S] cluster site is built by Cys270, Cys273, Cys305, and Glu312.

It belongs to the IspG family. Requires [4Fe-4S] cluster as cofactor.

It carries out the reaction (2E)-4-hydroxy-3-methylbut-2-enyl diphosphate + oxidized [flavodoxin] + H2O + 2 H(+) = 2-C-methyl-D-erythritol 2,4-cyclic diphosphate + reduced [flavodoxin]. The protein operates within isoprenoid biosynthesis; isopentenyl diphosphate biosynthesis via DXP pathway; isopentenyl diphosphate from 1-deoxy-D-xylulose 5-phosphate: step 5/6. In terms of biological role, converts 2C-methyl-D-erythritol 2,4-cyclodiphosphate (ME-2,4cPP) into 1-hydroxy-2-methyl-2-(E)-butenyl 4-diphosphate. The sequence is that of 4-hydroxy-3-methylbut-2-en-1-yl diphosphate synthase (flavodoxin) from Marinomonas sp. (strain MWYL1).